The following is a 336-amino-acid chain: 3-isopropylmalate dehydrogenase (336 aa).

Substrate-binding residues include R87, R97, R121, and D211. The Mg(2+) site is built by D211, D235, and D239. 271–283 (GSAPDIAGQGIAD) contacts NAD(+).

This sequence belongs to the isocitrate and isopropylmalate dehydrogenases family. LeuB type 2 subfamily. Homodimer. Requires Mg(2+) as cofactor. The cofactor is Mn(2+).

The protein localises to the cytoplasm. The catalysed reaction is (2R,3S)-3-isopropylmalate + NAD(+) = 4-methyl-2-oxopentanoate + CO2 + NADH. It functions in the pathway amino-acid biosynthesis; L-leucine biosynthesis; L-leucine from 3-methyl-2-oxobutanoate: step 3/4. Functionally, catalyzes the oxidation of 3-carboxy-2-hydroxy-4-methylpentanoate (3-isopropylmalate) to 3-carboxy-4-methyl-2-oxopentanoate. The product decarboxylates to 4-methyl-2 oxopentanoate. This is 3-isopropylmalate dehydrogenase from Mycobacterium leprae (strain Br4923).